The chain runs to 140 residues: MERTLTILKPDCVRKQLIGAVTNMIERAGFRIVAMKKTRLTKETAGAFYAVHKERPFYGELVEFMSSGPCVPMILEKENAVADFRTLIGATDPAQADEGTIRKLYADSKGENIIHGSDSAENAAIESAFFFAAEEVVRVD.

Residues Lys9, Phe57, Arg85, Thr91, Arg102, and Asn112 each contribute to the ATP site. The active-site Pros-phosphohistidine intermediate is His115.

The protein belongs to the NDK family. As to quaternary structure, homotetramer. The cofactor is Mg(2+).

The protein localises to the cytoplasm. The enzyme catalyses a 2'-deoxyribonucleoside 5'-diphosphate + ATP = a 2'-deoxyribonucleoside 5'-triphosphate + ADP. It carries out the reaction a ribonucleoside 5'-diphosphate + ATP = a ribonucleoside 5'-triphosphate + ADP. Major role in the synthesis of nucleoside triphosphates other than ATP. The ATP gamma phosphate is transferred to the NDP beta phosphate via a ping-pong mechanism, using a phosphorylated active-site intermediate. The protein is Nucleoside diphosphate kinase of Chlorobaculum tepidum (strain ATCC 49652 / DSM 12025 / NBRC 103806 / TLS) (Chlorobium tepidum).